Here is a 277-residue protein sequence, read N- to C-terminus: Ethanolamine ammonia-lyase small subunit (277 aa).

Adenosylcob(III)alamin-binding residues include valine 164, glutamate 185, and cysteine 214.

It belongs to the EutC family. As to quaternary structure, the basic unit is a heterodimer which dimerizes to form tetramers. The heterotetramers trimerize; 6 large subunits form a core ring with 6 small subunits projecting outwards. Requires adenosylcob(III)alamin as cofactor.

It localises to the bacterial microcompartment. The catalysed reaction is ethanolamine = acetaldehyde + NH4(+). It participates in amine and polyamine degradation; ethanolamine degradation. In terms of biological role, catalyzes the deamination of various vicinal amino-alcohols to oxo compounds. Allows this organism to utilize ethanolamine as the sole source of nitrogen and carbon in the presence of external vitamin B12. This Pseudomonas fluorescens (strain SBW25) protein is Ethanolamine ammonia-lyase small subunit.